We begin with the raw amino-acid sequence, 297 residues long: tRNA dimethylallyltransferase (297 aa).

Glycine 15–serine 22 contacts ATP. Threonine 17–serine 22 is a substrate binding site. 2 interaction with substrate tRNA regions span residues aspartate 40–glutamine 43 and glutamine 164–arginine 168.

It belongs to the IPP transferase family. As to quaternary structure, monomer. It depends on Mg(2+) as a cofactor.

It carries out the reaction adenosine(37) in tRNA + dimethylallyl diphosphate = N(6)-dimethylallyladenosine(37) in tRNA + diphosphate. In terms of biological role, catalyzes the transfer of a dimethylallyl group onto the adenine at position 37 in tRNAs that read codons beginning with uridine, leading to the formation of N6-(dimethylallyl)adenosine (i(6)A). This is tRNA dimethylallyltransferase from Rhizobium johnstonii (strain DSM 114642 / LMG 32736 / 3841) (Rhizobium leguminosarum bv. viciae).